The primary structure comprises 124 residues: MAISKDDILEAVGNLTVLELNDLVKAFEEKFGVSAAAMAAPAAGGAAGGAAAEEQTEFTVVLADFGANKVGVIKAVREITGLGLKEAKDLVDAAPKPLKEGVSKADAEAAKKKLEEAGAKAEIK.

Belongs to the bacterial ribosomal protein bL12 family. Homodimer. Part of the ribosomal stalk of the 50S ribosomal subunit. Forms a multimeric L10(L12)X complex, where L10 forms an elongated spine to which 2 to 4 L12 dimers bind in a sequential fashion. Binds GTP-bound translation factors.

Forms part of the ribosomal stalk which helps the ribosome interact with GTP-bound translation factors. Is thus essential for accurate translation. The sequence is that of Large ribosomal subunit protein bL12 from Janthinobacterium sp. (strain Marseille) (Minibacterium massiliensis).